Here is a 256-residue protein sequence, read N- to C-terminus: Small ribosomal subunit protein eS1 (256 aa).

Residues 1-18 (MAVGKNKRLSKGKKGIKK) show a composition bias toward basic residues. The segment at 1–20 (MAVGKNKRLSKGKKGIKKRT) is disordered. Ala-2 is subject to N-acetylalanine; partial.

This sequence belongs to the eukaryotic ribosomal protein eS1 family. As to quaternary structure, component of the small ribosomal subunit. Mature ribosomes consist of a small (40S) and a large (60S) subunit. The 40S subunit contains about 33 different proteins and 1 molecule of RNA (18S). The 60S subunit contains about 49 different proteins and 3 molecules of RNA (25S, 5.8S and 5S).

The protein localises to the cytoplasm. The chain is Small ribosomal subunit protein eS1 (rps1) from Aspergillus flavus (strain ATCC 200026 / FGSC A1120 / IAM 13836 / NRRL 3357 / JCM 12722 / SRRC 167).